The sequence spans 163 residues: Putative 4-hydroxy-4-methyl-2-oxoglutarate aldolase (163 aa).

Substrate-binding positions include 76 to 79 (GDML) and R98. D99 is a binding site for a divalent metal cation.

This sequence belongs to the class II aldolase/RraA-like family. As to quaternary structure, homotrimer. A divalent metal cation is required as a cofactor.

It catalyses the reaction 4-hydroxy-4-methyl-2-oxoglutarate = 2 pyruvate. It carries out the reaction oxaloacetate + H(+) = pyruvate + CO2. In terms of biological role, catalyzes the aldol cleavage of 4-hydroxy-4-methyl-2-oxoglutarate (HMG) into 2 molecules of pyruvate. Also contains a secondary oxaloacetate (OAA) decarboxylase activity due to the common pyruvate enolate transition state formed following C-C bond cleavage in the retro-aldol and decarboxylation reactions. This chain is Putative 4-hydroxy-4-methyl-2-oxoglutarate aldolase, found in Pseudomonas putida (strain W619).